The following is a 209-amino-acid chain: Protein-L-isoaspartate O-methyltransferase (209 aa).

Ser55 is an active-site residue.

This sequence belongs to the methyltransferase superfamily. L-isoaspartyl/D-aspartyl protein methyltransferase family.

Its subcellular location is the cytoplasm. It carries out the reaction [protein]-L-isoaspartate + S-adenosyl-L-methionine = [protein]-L-isoaspartate alpha-methyl ester + S-adenosyl-L-homocysteine. Functionally, catalyzes the methyl esterification of L-isoaspartyl residues in peptides and proteins that result from spontaneous decomposition of normal L-aspartyl and L-asparaginyl residues. It plays a role in the repair and/or degradation of damaged proteins. This is Protein-L-isoaspartate O-methyltransferase from Anaeromyxobacter dehalogenans (strain 2CP-1 / ATCC BAA-258).